An 816-amino-acid chain; its full sequence is Mitogen-activated protein kinase 7 (816 aa).

Positions 1–26 are disordered; sequence MAEPLKEEDGEDGSAEPPGPVKAEPA. Alanine 2 carries the N-acetylalanine modification. Positions 2–77 are required for cytoplasmic targeting; that stretch reads AEPLKEEDGE…VVSSARRRLT (76 aa). A Protein kinase domain is found at 55 to 347; sequence YEIIETIGNG…AAAALRHPFL (293 aa). Residues 61-69 and lysine 84 contribute to the ATP site; that span reads IGNGAYGVV. Positions 78–139 are required for binding to MAP2K5; that stretch reads GQQVAIKKIP…FKSVYVVLDL (62 aa). The interval 140–406 is necessary for oligomerization; sequence MESDLHQIIH…QQIRFQPSLQ (267 aa). The active-site Proton acceptor is the aspartate 182. A TXY motif is present at residues 219–221; the sequence is TEY. The segment at 406 to 737 is disordered; sequence QPVASEPGCP…PVFSGTPKGS (332 aa). The may not be required for kinase activity; required to stimulate MEF2C activity stretch occupies residues 407–806; the sequence is PVASEPGCPD…REIQMDSPML (400 aa). Pro residues-rich tracts occupy residues 433–445 and 454–463; these read SPPP…PGPA and QPPPPVSEPA. Low complexity predominate over residues 476–486; sequence KAALKAALLKS. 3 stretches are compositionally biased toward basic and acidic residues: residues 502 to 519, 527 to 544, and 563 to 573; these read PEPR…EREE, RAKE…KERG, and DNDRSLLERWT. The short motif at 505–539 is the Nuclear localization signal element; the sequence is RKPVTAQERQREREEKRRRRQERAKEREKRRQERE. Residues 578-587 are compositionally biased toward low complexity; it reads PAAPALTSVP. 2 stretches are compositionally biased toward pro residues: residues 588–610 and 628–655; these read APAP…PGPV and VPQP…PAPP. Low complexity predominate over residues 676-685; that stretch reads PGSSTPGVLP. Residues 686–695 show a composition bias toward pro residues; the sequence is YFPPGLPPPD. Residues 701-720 show a composition bias toward polar residues; it reads QSSMSESPDVNLVTQQLSKS. At serine 720 the chain carries Phosphoserine. Threonine 733 carries the phosphothreonine modification.

The protein belongs to the protein kinase superfamily. CMGC Ser/Thr protein kinase family. MAP kinase subfamily. As to quaternary structure, interacts with MAP2K5. Forms oligomers. Interacts with MEF2A, MEF2C and MEF2D; the interaction phosphorylates the MEF2s and enhances transcriptional activity of MEF2A, MEF2C but not MEF2D. Interacts with SGK1. Preferentially interacts with PML isoform PML-4 but shows interaction also with its other isoforms: isoform PML-1, isoform PML-2, isoform PML-3 and isoform PML-6. Interacts (via N-terminal half) with HSP90AB1-CDC37 chaperone complex in resting cells; the interaction is MAP2K5-independent and prevents MAPK7 from ubiquitination and proteasomal degradation. Interacts with STUB1/CHIP; the interaction is enhanced in the presence of IGF1 or MAP2K5 and promotes STUB1/CHIP E3 ligase activity. Mg(2+) is required as a cofactor. Post-translationally, dually phosphorylated on Thr-219 and Tyr-221, which activates the enzyme. Autophosphorylated in vitro on threonine and tyrosine residues when the C-terminal part of the kinase, which could have a regulatory role, is absent. As to expression, expressed in many adult tissues. Abundant in heart, placenta, lung, kidney and skeletal muscle. Not detectable in liver.

The protein localises to the cytoplasm. Its subcellular location is the nucleus. It localises to the PML body. It catalyses the reaction L-seryl-[protein] + ATP = O-phospho-L-seryl-[protein] + ADP + H(+). It carries out the reaction L-threonyl-[protein] + ATP = O-phospho-L-threonyl-[protein] + ADP + H(+). Its activity is regulated as follows. Activated by tyrosine and threonine phosphorylation. Activated in response to hyperosmolarity, hydrogen peroxide, and epidermal growth factor (EGF). Plays a role in various cellular processes such as proliferation, differentiation and cell survival. The upstream activator of MAPK7 is the MAPK kinase MAP2K5. Upon activation, it translocates to the nucleus and phosphorylates various downstream targets including MEF2C. EGF activates MAPK7 through a Ras-independent and MAP2K5-dependent pathway. As part of the MAPK/ERK signaling pathway, acts as a negative regulator of apoptosis in cardiomyocytes via interaction with STUB1/CHIP and promotion of STUB1-mediated ubiquitination and degradation of ICER-type isoforms of CREM. May have a role in muscle cell differentiation. May be important for endothelial function and maintenance of blood vessel integrity. MAP2K5 and MAPK7 interact specifically with one another and not with MEK1/ERK1 or MEK2/ERK2 pathways. Phosphorylates SGK1 at Ser-78 and this is required for growth factor-induced cell cycle progression. Involved in the regulation of p53/TP53 by disrupting the PML-MDM2 interaction. The polypeptide is Mitogen-activated protein kinase 7 (MAPK7) (Homo sapiens (Human)).